We begin with the raw amino-acid sequence, 288 residues long: ATP synthase gamma chain (288 aa).

Belongs to the ATPase gamma chain family. In terms of assembly, F-type ATPases have 2 components, CF(1) - the catalytic core - and CF(0) - the membrane proton channel. CF(1) has five subunits: alpha(3), beta(3), gamma(1), delta(1), epsilon(1). CF(0) has three main subunits: a, b and c.

It is found in the cell membrane. In terms of biological role, produces ATP from ADP in the presence of a proton gradient across the membrane. The gamma chain is believed to be important in regulating ATPase activity and the flow of protons through the CF(0) complex. This Staphylococcus saprophyticus subsp. saprophyticus (strain ATCC 15305 / DSM 20229 / NCIMB 8711 / NCTC 7292 / S-41) protein is ATP synthase gamma chain.